We begin with the raw amino-acid sequence, 117 residues long: MDLIKIAEEAFATGKQHPSFKAGDTVTVAYRIIEGNKERVQLYRGVVIKIAGHGDKKRFTVRKMSGTVGVERIFPIESPAIDSIEVNKVGKVRRAKLYYLRALTGKKARIKEKRVNN.

The protein belongs to the bacterial ribosomal protein bL19 family.

This protein is located at the 30S-50S ribosomal subunit interface and may play a role in the structure and function of the aminoacyl-tRNA binding site. This is Large ribosomal subunit protein bL19 from Bacteroides thetaiotaomicron (strain ATCC 29148 / DSM 2079 / JCM 5827 / CCUG 10774 / NCTC 10582 / VPI-5482 / E50).